The following is a 388-amino-acid chain: Dual-specificity RNA methyltransferase RlmN (388 aa).

Glutamate 109 acts as the Proton acceptor in catalysis. Residues 115-354 enclose the Radical SAM core domain; that stretch reads EDDRATLCVS…TIVRKTRGDD (240 aa). Cysteine 122 and cysteine 359 are oxidised to a cystine. [4Fe-4S] cluster-binding residues include cysteine 129, cysteine 133, and cysteine 136. Residues 183–184, serine 215, 237–239, and asparagine 316 each bind S-adenosyl-L-methionine; these read GE and SLH. The active-site S-methylcysteine intermediate is the cysteine 359.

The protein belongs to the radical SAM superfamily. RlmN family. The cofactor is [4Fe-4S] cluster.

It is found in the cytoplasm. It catalyses the reaction adenosine(2503) in 23S rRNA + 2 reduced [2Fe-2S]-[ferredoxin] + 2 S-adenosyl-L-methionine = 2-methyladenosine(2503) in 23S rRNA + 5'-deoxyadenosine + L-methionine + 2 oxidized [2Fe-2S]-[ferredoxin] + S-adenosyl-L-homocysteine. The catalysed reaction is adenosine(37) in tRNA + 2 reduced [2Fe-2S]-[ferredoxin] + 2 S-adenosyl-L-methionine = 2-methyladenosine(37) in tRNA + 5'-deoxyadenosine + L-methionine + 2 oxidized [2Fe-2S]-[ferredoxin] + S-adenosyl-L-homocysteine. Its function is as follows. Specifically methylates position 2 of adenine 2503 in 23S rRNA and position 2 of adenine 37 in tRNAs. m2A2503 modification seems to play a crucial role in the proofreading step occurring at the peptidyl transferase center and thus would serve to optimize ribosomal fidelity. The chain is Dual-specificity RNA methyltransferase RlmN from Citrobacter koseri (strain ATCC BAA-895 / CDC 4225-83 / SGSC4696).